The sequence spans 347 residues: Subtilase cytotoxin subunit A (347 aa).

The N-terminal stretch at Met1–Ala21 is a signal peptide. One can recognise a Peptidase S8 domain in the interval Pro24 to Ile327. Active-site charge relay system residues include Asp52, His89, and Ser272. Residues Cys288 and Cys331 are joined by a disulfide bond. The A2 domain stretch occupies residues Asn322–Leu347. The Prevents secretion from ER signature appears at Ser344–Leu347.

It belongs to the peptidase S8 family. Forms a complex with SubB with the stoichiometry SubA1:SubB5 (called SubAB5).

Its subcellular location is the secreted. The protein resides in the host cytoplasm. It is found in the host cytosol. It localises to the host endoplasmic reticulum lumen. Protease subunit of subtilase cytotoxin SubAB5. An endoprotease specific for host endoplasmic reticulum (ER) chaperone BiP/HSPA5, has no activity on human HSP70 or HSPA8. Cleaves between 'Leu-416' and 'Leu-417' of BiP/HSPA5 in the hinge between BiP's ATPase and protein-binding domains. This induces host ER stress response and eventual cell death. Culture supernatant of E.coli expressing both subA and subB are toxic for Vero cells (African green monkey kidney cell line), Chinese hamster ovary cells and Hct-8 cells (human colonic epithelial cell line); the subunits are not toxic individually. Purified SubAB5 is highly toxic, &lt;0.1 pg is able to kill at least 50% of 30'000 Vero cells in a microtiter plate assay after 3 days; no cytotoxicity is seen at 24 hours. Preabsorption with cells expressing a ganglioside GM2 mimic reduced cytotoxicity of SubAB5 by 93% in the Vero cytotoxicity assay. Intraperitoneal injection of 200 ng of purified SubAB5 kills mice; the higher the dose the faster the mice die. Animals injected intraperitoneally with purified SubAB5 have microvascular thrombi in the brain and other organs, including the renal tubules and glomeruli. Injection induces an unfolded response in mice. Mice fed E.coli cells expressing cloned SubAB5 experience drastic weight loss and appear ill and lethargic. Protein synthesis in Vero cells is transiently inhibited by SubAB5; both subunits are required for this effect. Inhibition of protein synthesis is prevented by brefeldin A; cells are arrested in the G1 phase. SubAB5 at 100 ng/ml induced caspase-dependent apoptosis in Vero cells through mitochondrial membrane damage. This chain is Subtilase cytotoxin subunit A, found in Escherichia coli.